We begin with the raw amino-acid sequence, 435 residues long: Putative dimethyl sulfoxide reductase membrane subunit C (435 aa).

The next 11 membrane-spanning stretches (helical) occupy residues 22-42 (GWLG…AYQL), 57-77 (WGLY…GLIL), 95-115 (LGVL…LPDI), 135-155 (VWDF…LWLL), 186-206 (FWTA…TGWI), 220-240 (LVAP…LLVV), 257-277 (LTSL…YLLA), 281-301 (LPHA…FLIG), 304-324 (VYFW…LATP), 333-353 (IFTA…RLVF), and 392-412 (VEIA…MAGL).

The protein belongs to the NrfD family. In terms of assembly, probable multiprotein complex that likely consists of DmsA, DmsB and DmsC.

It is found in the cell membrane. Functionally, dimethyl sulfoxide (DMSO) reductase catalyzes the reduction of dimethyl sulfoxide (DMSO) to dimethyl sulfide (DMS) during anaerobic respiration; it can also use trimethylamine N-oxide (TMAO) as terminal electron acceptor. Subunit C is proposed to be a membrane anchoring subunit. The polypeptide is Putative dimethyl sulfoxide reductase membrane subunit C (dmsC) (Halobacterium salinarum (strain ATCC 700922 / JCM 11081 / NRC-1) (Halobacterium halobium)).